Consider the following 378-residue polypeptide: uncharacterized protein (378 aa).

A compositionally biased stretch (polar residues) spans M1–K11. Positions M1–P33 are disordered.

To B.subtilis YxjH.

This is an uncharacterized protein from Bacillus subtilis (strain 168).